The primary structure comprises 316 residues: Olfactory receptor 2H1 (316 aa).

The Extracellular segment spans residues 1 to 23 (MVNQSSPMGFLLLGFSEHPALER). The N-linked (GlcNAc...) asparagine glycan is linked to Asn3. A helical transmembrane segment spans residues 24-47 (TLFVVVFTSYLLTLVGNTLIILLS). Residues 48–55 (VLYPRLHS) are Cytoplasmic-facing. Residues 56–77 (PMYFFLSDLSFLDLCFTTSCVP) form a helical membrane-spanning segment. The Extracellular segment spans residues 78–98 (QMLVNLWGPKKTISFLGCSVQ). Residues Cys95 and Cys187 are joined by a disulfide bond. Residues 99-118 (LFIFLSLGTTECILLTVMAF) form a helical membrane-spanning segment. The Cytoplasmic portion of the chain corresponds to 119-137 (DRYVAVCQPLHYATIIHPR). The helical transmembrane segment at 138 to 156 (LCWQLASVAWVMSLVQSIV) threads the bilayer. At 157 to 193 (QTPSTLHLPFCPHQQIDDFLCEVPSLIRLSCGDTSYN) the chain is on the extracellular side. Residues 194–217 (EIQLAVSSVIFVVVPLSLILASYG) form a helical membrane-spanning segment. At 218 to 234 (ATAQAVLRINSATAWRK) the chain is on the cytoplasmic side. Residues 235-257 (AFGTCSSHLTVVTLFYSSVIAVY) form a helical membrane-spanning segment. Over 258 to 270 (LQPKNPYAQGRGK) the chain is Extracellular. The chain crosses the membrane as a helical span at residues 271–290 (FFGLFYAVGTPSLNPLVYTL). The Cytoplasmic portion of the chain corresponds to 291–316 (RNKEIKRALRRLLGKERDSRESWRAA).

It belongs to the G-protein coupled receptor 1 family.

It localises to the cell membrane. Its function is as follows. Odorant receptor. The chain is Olfactory receptor 2H1 (OR2H1) from Homo sapiens (Human).